Reading from the N-terminus, the 542-residue chain is Cytochrome P450 734A6 (542 aa).

Residues 2–22 (GWWGWAAAAAAAAAWVAVKVL) traverse the membrane as a helical segment. Heme is bound at residue Cys-474.

Belongs to the cytochrome P450 family. It depends on heme as a cofactor. Highly expressed in leaf sheaths. Expressed in roots, shoot apex, leaf blades, internodes and panicles.

Its subcellular location is the membrane. Cytochrome P450 involved in brassinosteroids (BRs) inactivation and regulation of BRs homeostasis. Is a multifunctional and multisubstrate enzyme that controls the endogenous bioactive BR content both by direct inactivation of castasterone (CS) and by decreasing the levels of BR precursors. Catalyzes the oxidation of carbon 22 hydroxylated BR intermediates to produce C26 oxidized metabolites. The sequence is that of Cytochrome P450 734A6 (CYP734A6) from Oryza sativa subsp. japonica (Rice).